Consider the following 424-residue polypeptide: Hemagglutinin-esterase (424 aa).

The N-terminal stretch at 1-16 (MFLLPRFVLVSCIIGS) is a signal peptide. The esterase domain 1 stretch occupies residues 7–127 (FVLVSCIIGS…SNDIWMQNKG (121 aa)). Residues 17–392 (LGFDNPPTNV…PICVYDPLPI (376 aa)) lie on the Virion surface side of the membrane. Residue Ser40 is the Nucleophile of the active site. An intrachain disulfide couples Cys44 to Cys65. N-linked (GlcNAc...) asparagine; by host glycans are attached at residues Asn54, Asn89, Asn153, Asn236, and Asn301. Disulfide bonds link Cys113-Cys162, Cys197-Cys276, and Cys205-Cys249. The receptor binding stretch occupies residues 128-266 (LFYTQVYKNM…GNYLAISNEL (139 aa)). The interval 267–379 (LLTVPTKAIC…RCPTAADINT (113 aa)) is esterase domain 2. Cys307 and Cys312 form a disulfide bridge. N-linked (GlcNAc...) asparagine; by host glycosylation is present at Asn316. Residues Asp326 and His329 each act as charge relay system in the active site. The cysteines at positions 347 and 371 are disulfide-linked. Asn358 carries N-linked (GlcNAc...) asparagine; by host glycosylation. The chain crosses the membrane as a helical span at residues 393-413 (ILLGILLGVAVIIIVVLLLYF). Residues 414-424 (MVDNGTRLHDA) lie on the Intravirion side of the membrane. N-linked (GlcNAc...) asparagine; by host glycosylation is present at Asn417.

It belongs to the influenza type C/coronaviruses hemagglutinin-esterase family. Homodimer; disulfide-linked. Forms a complex with the M protein in the pre-Golgi. Associates then with S-M complex to form a ternary complex S-M-HE. Post-translationally, N-glycosylated in the RER. In terms of processing, N-glycosylated in the host RER.

Its subcellular location is the virion membrane. It localises to the host cell membrane. The enzyme catalyses N-acetyl-9-O-acetylneuraminate + H2O = N-acetylneuraminate + acetate + H(+). The catalysed reaction is N-acetyl-4-O-acetylneuraminate + H2O = N-acetylneuraminate + acetate + H(+). Its function is as follows. Structural protein that makes short spikes at the surface of the virus. Contains receptor binding and receptor-destroying activities. Mediates de-O-acetylation of N-acetyl-4-O-acetylneuraminic acid, which is probably the receptor determinant recognized by the virus on the surface of erythrocytes and susceptible cells. This receptor-destroying activity is important for virus release as it probably helps preventing self-aggregation and ensures the efficient spread of the progeny virus from cell to cell. May serve as a secondary viral attachment protein for initiating infection, the spike protein being the major one. May become a target for both the humoral and the cellular branches of the immune system. The sequence is that of Hemagglutinin-esterase from Bovine coronavirus (strain 98TXSF-110-ENT) (BCoV-ENT).